A 656-amino-acid polypeptide reads, in one-letter code: Chaperone protein DnaK (656 aa).

T204 carries the post-translational modification Phosphothreonine; by autocatalysis. Residues 602 to 656 (KLAERVYAKKGGAAGAPPGGEAEGEPQAQAGGKKEDVVDAEFEEVKDEKKKDEDK) are disordered. A compositionally biased stretch (low complexity) spans 620 to 632 (GGEAEGEPQAQAG). Residues 647–656 (KDEKKKDEDK) show a composition bias toward basic and acidic residues.

Belongs to the heat shock protein 70 family.

Functionally, acts as a chaperone. This chain is Chaperone protein DnaK, found in Coxiella burnetii (strain CbuG_Q212) (Coxiella burnetii (strain Q212)).